Consider the following 193-residue polypeptide: Putative RING finger protein ORF38 (193 aa).

An RING-type zinc finger spans residues 12–50 (CCICLDDEDVDRDNTIPCRHTVCRTCYVKPMLDQCPVCR).

The sequence is that of Putative RING finger protein ORF38 from Magallana gigas (Pacific oyster).